The sequence spans 428 residues: MVEASLRVSGSTNPISGRIVANGAKNSALPIMAACLLLNGSVVLAGMPDLRDVTVMSELITSLGGRISFLRNTKEKANHKVEINCDNLHNWAIPHEITSQMRASCLTLGPILTRMGRAEVALPGGCSIGSRPLDMHIWALQKLGAKVEVCGNYVKCSSSGKLVGCHIDFQSVSVGATENALMAAVMAHGTTTISNAAIEPEVADLAHFLVKAGAQISGIGTRTLQICGVQQLSGPSHTIIRDRMEAGTYALAAISTGGSVHIAGVTSEILGCLAHELEGMGGKVTDVPDGLVVSRHSPQINPVVLHTAPYPGFPSDMQAQFAATACLARGTSQIHEHVFDRRFSYARELAKMGADIHVQGNTASIRGVDKLHGASVQAPDLRASAALLIAGLSAQGVTTISNAQTLYRGYEAMEEKLRACGAEVELVR.

25–26 (KN) lines the phosphoenolpyruvate pocket. Residue arginine 102 coordinates UDP-N-acetyl-alpha-D-glucosamine. Catalysis depends on cysteine 126, which acts as the Proton donor. Cysteine 126 is modified (2-(S-cysteinyl)pyruvic acid O-phosphothioketal). 2 residues coordinate UDP-N-acetyl-alpha-D-glucosamine: aspartate 316 and valine 338.

This sequence belongs to the EPSP synthase family. MurA subfamily.

It is found in the cytoplasm. The catalysed reaction is phosphoenolpyruvate + UDP-N-acetyl-alpha-D-glucosamine = UDP-N-acetyl-3-O-(1-carboxyvinyl)-alpha-D-glucosamine + phosphate. It functions in the pathway cell wall biogenesis; peptidoglycan biosynthesis. Functionally, cell wall formation. Adds enolpyruvyl to UDP-N-acetylglucosamine. This is UDP-N-acetylglucosamine 1-carboxyvinyltransferase from Anaplasma marginale (strain St. Maries).